Reading from the N-terminus, the 960-residue chain is Gamma-aminobutyric acid type B receptor subunit 1 (960 aa).

An N-terminal signal peptide occupies residues 1-19; it reads MLLLLLVPLFLRPLGAGGA. The Extracellular portion of the chain corresponds to 20–590; that stretch reads QTPNATSEGC…KTFRFLSQKL (571 aa). Asn-23 and Asn-83 each carry an N-linked (GlcNAc...) asparagine glycan. Sushi domains are found at residues 29-95 and 97-158; these read CQII…PSRC and RICS…HCQV. 3 disulfide bridges follow: Cys-99–Cys-144, Cys-130–Cys-156, and Cys-219–Cys-245. Residues Ser-246, Ser-269, His-286, and Tyr-366 each coordinate 4-aminobutanoate. Cysteines 375 and 409 form a disulfide. Asn-408 and Asn-439 each carry an N-linked (GlcNAc...) asparagine glycan. Glu-465 provides a ligand contact to 4-aminobutanoate. N-linked (GlcNAc...) asparagine glycosylation is found at Asn-481, Asn-501, and Asn-513. Residues 591–611 form a helical membrane-spanning segment; the sequence is FISVSVLSSLGIVLAVVCLSF. Residues 612–630 are Cytoplasmic-facing; it reads NIYNSHVRYIQNSQPNLNN. Residues 631 to 651 form a helical membrane-spanning segment; that stretch reads LTAVGCSLALAAVFPLGLDGY. The Extracellular portion of the chain corresponds to 652-666; that stretch reads HIGRSQFPFVCQARL. Residues 667–687 traverse the membrane as a helical segment; that stretch reads WLLGLGFSLGYGSMFTKIWWV. Over 688–709 the chain is Cytoplasmic; that stretch reads HTVFTKKEEKKEWRKTLEPWKL. The helical transmembrane segment at 710-730 threads the bilayer; that stretch reads YATVGLLVGMDVLTLAIWQIV. The Extracellular portion of the chain corresponds to 731–767; sequence DPLHRTIETFAKEEPKEDIDVSILPQLEHCSSKKMNT. Residues 768–788 traverse the membrane as a helical segment; that stretch reads WLGIFYGYKGLLLLLGIFLAY. Residues 789-803 are Cytoplasmic-facing; sequence ETKSVSTEKINDHRA. The helical transmembrane segment at 804–824 threads the bilayer; it reads VGMAIYNVAVLCLITAPVTMI. Residues 825 to 832 lie on the Extracellular side of the membrane; that stretch reads LSSQQDAA. A helical membrane pass occupies residues 833–853; it reads FAFASLAIVFSSYITLVVLFV. Residues 854–960 are Cytoplasmic-facing; that stretch reads PKMRRLITRG…DGSRVHLLYK (107 aa). Over residues 866-879 the composition is skewed to polar residues; sequence QSETQDTMKTGSST. Disordered regions lie at residues 866 to 891 and 908 to 960; these read QSET…RLLE and VSEL…LLYK. Positions 870-924 form a coiled coil; it reads QDTMKTGSSTNNNEEEKSRLLEKENRELEKIIAEKEERVSELRHQLQSRQQLRSR. A Phosphothreonine modification is found at Thr-872. The tract at residues 887–915 is interaction with ATF4; that stretch reads SRLLEKENRELEKIIAEKEERVSELRHQL. Phosphothreonine is present on Thr-929.

This sequence belongs to the G-protein coupled receptor 3 family. GABA-B receptor subfamily. In terms of assembly, heterodimer of GABBR1 and GABBR2. Homodimers may form, but are inactive. Interacts (via C-terminus) with ATF4 (via leucine zipper domain). Interacts with JAKMIP1. As to expression, ubiquitously expressed in tissues including the forebrain, cerebellum, eye, atrium, ventricle, lung, stomach, small intestine, colon, liver, spleen, kidney, urinary bladder and skeletal muscle. Expressed at low levels in testis, and more highly in brain regions. Expression is high the brain regions including cerebral cortical layers, with higher expression in VIb than in the II-V layers, pyramidal CA1-CA3 cell layers and granular cell layers of the hippocampus, granular cell layers of the dentate gyrus, including the caudate, putamen, nucleus accumbens and olfactory tubercle, the granular layer cell layers of the medial habenula, in the cerebellum, predominantly in Purkinje cells, and in the granule cell layer. Also expressed in areas of the brain including the medial geniculate nucleus, substantia nigra, pars compacta, the ventral tegmental area, and in several thalamic, amygdaloid and hypothalamic nuclei, such as the arcuate nucleus of the hypothalamus and mammilary bodies of the hypothalamus. Expressed in the amacrine cell of the retina. Expressed in the brain, spinal cord, stomach, testis, adrenal gland, pituitary, spleen and prostate. In terms of tissue distribution, expressed in the brain, spinal cord, stomach, testis, kidney and liver. As to expression, ubiquitously expressed. Expressed in the forebrain, cerebellum, eye, kidney and urinary bladder. In terms of tissue distribution, ubiquitously expressed with high expression in the pyramidal CA1-CA3 cell layers of the hippocampus, the granule cell layers of the dentate gyrus and olfactory tubercle, the whole cortex, and Purkinje cells of the cerebellum. Moderate expression in the granule cell layer of the cerebellum.

It localises to the cell membrane. The protein resides in the postsynaptic cell membrane. Its subcellular location is the cell projection. The protein localises to the dendrite. It is found in the perikaryon. Functionally, component of a heterodimeric G-protein coupled receptor for GABA, formed by GABBR1 and GABBR2. Within the heterodimeric GABA receptor, only GABBR1 seems to bind agonists, while GABBR2 mediates coupling to G proteins. Ligand binding causes a conformation change that triggers signaling via guanine nucleotide-binding proteins (G proteins) and modulates the activity of down-stream effectors, such as adenylate cyclase. Signaling inhibits adenylate cyclase, stimulates phospholipase A2, activates potassium channels, inactivates voltage-dependent calcium-channels and modulates inositol phospholipid hydrolysis. Calcium is required for high affinity binding to GABA. Plays a critical role in the fine-tuning of inhibitory synaptic transmission. Pre-synaptic GABA receptor inhibits neurotransmitter release by down-regulating high-voltage activated calcium channels, whereas postsynaptic GABA receptor decreases neuronal excitability by activating a prominent inwardly rectifying potassium (Kir) conductance that underlies the late inhibitory postsynaptic potentials. Not only implicated in synaptic inhibition but also in hippocampal long-term potentiation, slow wave sleep, muscle relaxation and antinociception. This chain is Gamma-aminobutyric acid type B receptor subunit 1 (Gabbr1), found in Rattus norvegicus (Rat).